Reading from the N-terminus, the 1544-residue chain is Zinc finger protein GLI2 (1544 aa).

Positions 1 to 26 (METSAPAPALEKKEAKSGLLEDSSFP) are disordered. Phosphoserine occurs at positions 145, 230, 232, and 238. Residues 338–364 (SSSSSNCLNDANQNKQNSESAVSSTVN) are disordered. At S385 the chain carries Phosphoserine; by DYRK2. Residues 417 to 444 (TNCHWADCTKEYDTQEQLVHHINNEHIH) form a C2H2-type 1 zinc finger. A C2H2-type 2; degenerate zinc finger spans residues 455–477 (QACTREQKPFKAQYMLVVHMRRH). 3 C2H2-type zinc fingers span residues 483-507 (HKCT…LRSH), 513-538 (YVCE…NRTH), and 544-569 (YICK…KTVH). 2 disordered regions span residues 557-619 (DPSS…TSHT) and 635-682 (GLCQ…ALAD). The segment covering 569-585 (HGPDAHVTKKQRNDVHV) has biased composition (basic and acidic residues). Low complexity predominate over residues 637–657 (CQSSPGAQSSCSSEPSPLGSA). Phosphoserine is present on S707. Residue T708 is modified to Phosphothreonine. At K740 the chain carries N6-acetyllysine; by EP300. Disordered stretches follow at residues 781–800 (SQLQ…AYTV), 805–861 (SGIS…PGLL), 908–963 (ALPG…RRPD), 995–1016 (VQSH…RPPS), 1166–1220 (FGQY…CLGM), and 1422–1457 (GGCP…VSST). 2 stretches are compositionally biased toward polar residues: residues 790 to 800 (STSTMSSAYTV) and 805 to 814 (SGISPYFSSR). Positions 954 to 963 (RASDPVRRPD) are enriched in basic and acidic residues. The residue at position 997 (S997) is a Phosphoserine; by DYRK2. 3 stretches are compositionally biased toward polar residues: residues 997-1009 (SHPS…TRNA), 1173-1190 (NPQS…TQPH), and 1200-1209 (SRGSYTQQPR).

Belongs to the GLI C2H2-type zinc-finger protein family. Interacts with ZIC1 and ZIC2. Interacts with STK36. Interacts with SUFU; this inhibits transcriptional activation mediated by GLI2. Interacts (via C-terminal internal region) with FOXC1 (via N-terminus); this interaction is direct and increases GLI2 DNA-binding and transcriptional activity through a smoothened (SMO)-independent Hedgehog (Hh) signaling pathway. In terms of processing, phosphorylated in vitro by ULK3. Phosphorylated by DYRK2; this inhibits GLI2 transcription factor activity and promotes proteasomal degradation of GLI2. Acetylation at Lys-740 inhibits Hh target gene expression, probably by impeding entry into chromatin thus preventing promoter occupancy.

The protein localises to the nucleus. It is found in the cytoplasm. Its subcellular location is the cell projection. It localises to the cilium. In terms of biological role, functions as a transcription regulator in the hedgehog (Hh) pathway. Functions as a transcriptional activator. May also function as transcriptional repressor. Requires STK36 for full transcriptional activator activity. Binds to the DNA sequence 5'-GAACCACCCA-3' which is part of the TRE-2S regulatory element. Is involved in the smoothened (SHH) signaling pathway. Required for normal skeleton development. This Mus musculus (Mouse) protein is Zinc finger protein GLI2.